A 192-amino-acid chain; its full sequence is Rhomboid protease GlpG (192 aa).

The Cytoplasmic portion of the chain corresponds to 1 to 10; the sequence is MKNFLAQQGK. The chain crosses the membrane as a helical span at residues 11-31; that stretch reads ITLILTALCVLIYLAQQLGFE. Over 32 to 57 the chain is Periplasmic; the sequence is DDIMYLMHYPAYEEQDSEVWRYISHT. Residues 58–78 traverse the membrane as a helical segment; it reads LVHLSNLHILFNLSWFFIFGG. The Cytoplasmic segment spans residues 79–82; the sequence is MIER. A helical transmembrane segment spans residues 83 to 103; sequence TFGSVKLLMLYVVASAITGYV. The Periplasmic portion of the chain corresponds to 104–107; it reads QNYV. The chain crosses the membrane as a helical span at residues 108-128; the sequence is SGPAFFGLSGVVYAVLGYVFI. The active-site Nucleophile is S116. The Cytoplasmic segment spans residues 129–141; it reads RDKLNHHLFDLPE. A helical membrane pass occupies residues 142–162; it reads GFFTMLLVGIALGFISPLFGV. Position 163 (E163) is a topological domain, periplasmic. The chain crosses the membrane as a helical span at residues 164–184; the sequence is MGNAAHISGLIVGLIWGFIDS. H169 is an active-site residue. At 185–192 the chain is on the cytoplasmic side; sequence KLRKNSLE.

The protein belongs to the peptidase S54 family.

It is found in the cell inner membrane. The catalysed reaction is Cleaves type-1 transmembrane domains using a catalytic dyad composed of serine and histidine that are contributed by different transmembrane domains.. Its function is as follows. Rhomboid-type serine protease that catalyzes intramembrane proteolysis. This is Rhomboid protease GlpG (glpG) from Haemophilus influenzae (strain ATCC 51907 / DSM 11121 / KW20 / Rd).